A 328-amino-acid polypeptide reads, in one-letter code: Delta-aminolevulinic acid dehydratase (328 aa).

Residue K200 is the Schiff-base intermediate with substrate of the active site. Residues R210 and K222 each coordinate 5-aminolevulinate. Mg(2+) is bound at residue E238. K253 acts as the Schiff-base intermediate with substrate in catalysis. 2 residues coordinate 5-aminolevulinate: S279 and Y318.

Belongs to the ALAD family. As to quaternary structure, homooctamer.

It carries out the reaction 2 5-aminolevulinate = porphobilinogen + 2 H2O + H(+). The protein operates within porphyrin-containing compound metabolism; protoporphyrin-IX biosynthesis; coproporphyrinogen-III from 5-aminolevulinate: step 1/4. With respect to regulation, stimulated by magnesium, inhibited by zinc. Its function is as follows. Catalyzes an early step in the biosynthesis of tetrapyrroles. Binds two molecules of 5-aminolevulinate per subunit, each at a distinct site, and catalyzes their condensation to form porphobilinogen. This is Delta-aminolevulinic acid dehydratase (hemB) from Chlorobaculum tepidum (strain ATCC 49652 / DSM 12025 / NBRC 103806 / TLS) (Chlorobium tepidum).